Reading from the N-terminus, the 333-residue chain is Phosphoenolpyruvate transferase (333 aa).

Residue D65 coordinates 7,8-didemethyl-8-hydroxy-5-deazariboflavin.

Belongs to the CofD family. As to quaternary structure, homodimer. Mg(2+) is required as a cofactor.

It catalyses the reaction enolpyruvoyl-2-diphospho-5'-guanosine + 7,8-didemethyl-8-hydroxy-5-deazariboflavin = dehydro coenzyme F420-0 + GMP + H(+). Its pathway is cofactor biosynthesis; coenzyme F420 biosynthesis. Its function is as follows. Catalyzes the transfer of the phosphoenolpyruvate moiety from enoylpyruvoyl-2-diphospho-5'-guanosine (EPPG) to 7,8-didemethyl-8-hydroxy-5-deazariboflavin (FO) with the formation of dehydro coenzyme F420-0 and GMP. In Mycobacterium leprae (strain TN), this protein is Phosphoenolpyruvate transferase.